A 519-amino-acid polypeptide reads, in one-letter code: Anthranilate synthase component 1 (519 aa).

L-tryptophan is bound by residues Ser-39 and 290–292; that span reads PYM. A chorismate-binding site is contributed by 327–328; sequence GT. Glu-360 is a binding site for Mg(2+). Chorismate is bound by residues Tyr-448, Arg-468, 482–484, and Gly-484; that span reads GAG. Glu-497 contributes to the Mg(2+) binding site.

Belongs to the anthranilate synthase component I family. As to quaternary structure, heterotetramer consisting of two non-identical subunits: a beta subunit (TrpG) and a large alpha subunit (TrpE). Mg(2+) serves as cofactor.

It catalyses the reaction chorismate + L-glutamine = anthranilate + pyruvate + L-glutamate + H(+). Its pathway is amino-acid biosynthesis; L-tryptophan biosynthesis; L-tryptophan from chorismate: step 1/5. With respect to regulation, feedback inhibited by tryptophan. Its function is as follows. Part of a heterotetrameric complex that catalyzes the two-step biosynthesis of anthranilate, an intermediate in the biosynthesis of L-tryptophan. In the first step, the glutamine-binding beta subunit (TrpG) of anthranilate synthase (AS) provides the glutamine amidotransferase activity which generates ammonia as a substrate that, along with chorismate, is used in the second step, catalyzed by the large alpha subunit of AS (TrpE) to produce anthranilate. In the absence of TrpG, TrpE can synthesize anthranilate directly from chorismate and high concentrations of ammonia. The chain is Anthranilate synthase component 1 (trpE) from Serratia marcescens.